The primary structure comprises 278 residues: Biotin synthase (278 aa).

Residues 1 to 227 (MQIMLCAISN…QSVVMVAGGR (227 aa)) enclose the Radical SAM core domain. 3 residues coordinate [4Fe-4S] cluster: cysteine 16, cysteine 20, and cysteine 23. Residues cysteine 60, cysteine 95, and cysteine 153 each contribute to the [2Fe-2S] cluster site.

Belongs to the radical SAM superfamily. Biotin synthase family. As to quaternary structure, homodimer. Requires [4Fe-4S] cluster as cofactor. [2Fe-2S] cluster serves as cofactor.

It catalyses the reaction (4R,5S)-dethiobiotin + (sulfur carrier)-SH + 2 reduced [2Fe-2S]-[ferredoxin] + 2 S-adenosyl-L-methionine = (sulfur carrier)-H + biotin + 2 5'-deoxyadenosine + 2 L-methionine + 2 oxidized [2Fe-2S]-[ferredoxin]. The protein operates within cofactor biosynthesis; biotin biosynthesis; biotin from 7,8-diaminononanoate: step 2/2. Its function is as follows. Catalyzes the conversion of dethiobiotin (DTB) to biotin by the insertion of a sulfur atom into dethiobiotin via a radical-based mechanism. This Campylobacter jejuni (strain RM1221) protein is Biotin synthase.